Here is a 267-residue protein sequence, read N- to C-terminus: Hydroxyethylthiazole kinase 2 (267 aa).

Met-41 provides a ligand contact to substrate. Positions 116 and 166 each coordinate ATP. Gly-193 lines the substrate pocket.

This sequence belongs to the Thz kinase family. Mg(2+) serves as cofactor.

The catalysed reaction is 5-(2-hydroxyethyl)-4-methylthiazole + ATP = 4-methyl-5-(2-phosphooxyethyl)-thiazole + ADP + H(+). Its pathway is cofactor biosynthesis; thiamine diphosphate biosynthesis; 4-methyl-5-(2-phosphoethyl)-thiazole from 5-(2-hydroxyethyl)-4-methylthiazole: step 1/1. Functionally, catalyzes the phosphorylation of the hydroxyl group of 4-methyl-5-beta-hydroxyethylthiazole (THZ). This is Hydroxyethylthiazole kinase 2 from Streptococcus pneumoniae (strain Taiwan19F-14).